We begin with the raw amino-acid sequence, 491 residues long: Probable Xaa-Pro aminopeptidase AFLA_084750 (491 aa).

Mn(2+) contacts are provided by Asp-271, Asp-282, Glu-419, and Glu-458.

The protein belongs to the peptidase M24B family. Requires Mn(2+) as cofactor.

The enzyme catalyses Release of any N-terminal amino acid, including proline, that is linked to proline, even from a dipeptide or tripeptide.. Its function is as follows. Catalyzes the removal of a penultimate prolyl residue from the N-termini of peptides. This is Probable Xaa-Pro aminopeptidase AFLA_084750 from Aspergillus flavus (strain ATCC 200026 / FGSC A1120 / IAM 13836 / NRRL 3357 / JCM 12722 / SRRC 167).